A 785-amino-acid polypeptide reads, in one-letter code: Hypha-specific G1 cyclin-related protein 1 (785 aa).

Positions 1–42 are disordered; it reads MINITKPLTPKSISQQKQQQQHPYKNISTTKSNNNPQASGSK. Polar residues predominate over residues 22 to 42; sequence HPYKNISTTKSNNNPQASGSK. A Cyclin N-terminal domain is found at 71 to 238; that stretch reads DIYDIMVNLI…VLNTLEWSLN (168 aa). Disordered regions lie at residues 408–433, 447–679, and 750–774; these read TTTT…TTPV, VSST…SKFN, and NNSG…DSPI. Composition is skewed to low complexity over residues 447 to 473 and 484 to 512; these read VSST…STTP and NYSN…NNTT. Positions 513–535 are enriched in polar residues; sequence ISPVDSTTINSHTKNSSQLNYQY. Residues 579 to 613 are compositionally biased toward low complexity; it reads NSANKNSNKSNSANNNNTTTIATTTTTTTNNNNNS. Polar residues predominate over residues 621–631; that stretch reads LSYNNYFNSPN. Residues 646 to 679 show a composition bias toward low complexity; the sequence is QQQQQNQGQNQQQPLQLYQGDNNNNGTNTNSKFN. Over residues 754-764 the composition is skewed to gly residues; the sequence is NGKGNGNGGSG. Residues 765 to 774 show a composition bias toward polar residues; it reads TPISENDSPI.

It belongs to the cyclin family. In terms of assembly, interacts with CDC28.

In terms of biological role, hypha-specific G1 cyclin-related protein involved in regulation of morphogenesis and opaque cells filamentous growth, and required for both conventional and pheromone-stimulated biofilm formation. Required to maintain hyphal tip localization of actin and SPA2. Regulates the CDC28 kinase during hyphal growth. The CDC28-HGC1 complex phosphorylates and prevents RGA2 from localizing to hyphal tips, leading to localized CDC42 activation for hyphal extension. The CDC28-HGC1 complex also phosphorylates SEC2 and maintains CDC11 phosphorylation throughout hyphal growth. Moreover CDC28-HGC1 phosphorylation of EFG1 represses cell separation genes during hyphal growth. Also partially controls SEP7 phosphorylation status and subsequent septin ring dynamics. Required for virulence and especially mediates dynamic adhesion to endothelium of blood vessels during circulation. The chain is Hypha-specific G1 cyclin-related protein 1 (HGC1) from Candida albicans (strain SC5314 / ATCC MYA-2876) (Yeast).